The sequence spans 588 residues: Phosphomethylpyrimidine synthase (588 aa).

Residues Asn-212, Met-241, Tyr-270, His-306, 326 to 328 (SRG), 367 to 370 (DGLR), and Glu-406 each bind substrate. His-410 is a binding site for Zn(2+). Tyr-433 contacts substrate. His-474 contributes to the Zn(2+) binding site. Cys-554, Cys-557, and Cys-562 together coordinate [4Fe-4S] cluster.

This sequence belongs to the ThiC family. Homodimer. Requires [4Fe-4S] cluster as cofactor.

The enzyme catalyses 5-amino-1-(5-phospho-beta-D-ribosyl)imidazole + S-adenosyl-L-methionine = 4-amino-2-methyl-5-(phosphooxymethyl)pyrimidine + CO + 5'-deoxyadenosine + formate + L-methionine + 3 H(+). The protein operates within cofactor biosynthesis; thiamine diphosphate biosynthesis. Catalyzes the synthesis of the hydroxymethylpyrimidine phosphate (HMP-P) moiety of thiamine from aminoimidazole ribotide (AIR) in a radical S-adenosyl-L-methionine (SAM)-dependent reaction. The protein is Phosphomethylpyrimidine synthase of Bartonella quintana (strain Toulouse) (Rochalimaea quintana).